We begin with the raw amino-acid sequence, 315 residues long: Putative peptide transport system permease protein BMEII0209 (315 aa).

The next 6 membrane-spanning stretches (helical) occupy residues 13–33 (AIPVMLIVAILTFLLMKLLPG), 102–122 (LALLAFAITIPVGIIMGVVAA), 136–156 (LALLGVSVPSFWLAILAVILF), 178–198 (WLRSLILPASILALFQIGYLA), 238–258 (VSVLTVSGYIFSLLIGGSVVI), and 287–307 (MLFLGFLFVAINVLVDILYTI). One can recognise an ABC transmembrane type-1 domain in the interval 96–305 (LPVTISLALL…AINVLVDILY (210 aa)).

The protein belongs to the binding-protein-dependent transport system permease family. The complex is composed of two ATP-binding proteins (BMEII0205 and BMEII0206), two transmembrane proteins (BMEII0207/BMEII0208 and BMEII0209) and a solute-binding protein (BMEII0210).

The protein localises to the cell inner membrane. Functionally, probably part of an ABC transporter complex that could be involved in peptide import. Probably responsible for the translocation of the substrate across the membrane. The protein is Putative peptide transport system permease protein BMEII0209 of Brucella melitensis biotype 1 (strain ATCC 23456 / CCUG 17765 / NCTC 10094 / 16M).